The sequence spans 284 residues: RNase adapter protein RapZ (284 aa).

8–15 (GRSGSGKS) serves as a coordination point for ATP. 56-59 (DVRN) contributes to the GTP binding site. The RNA-binding stretch occupies residues 266–284 (RSRGKNVQSRHRTLEKRKT).

This sequence belongs to the RapZ-like family. RapZ subfamily. As to quaternary structure, homotrimer.

Functionally, modulates the synthesis of GlmS, by affecting the processing and stability of the regulatory small RNA GlmZ. When glucosamine-6-phosphate (GlcN6P) concentrations are high in the cell, RapZ binds GlmZ and targets it to cleavage by RNase E. Consequently, GlmZ is inactivated and unable to activate GlmS synthesis. Under low GlcN6P concentrations, RapZ is sequestered and inactivated by an other regulatory small RNA, GlmY, preventing GlmZ degradation and leading to synthesis of GlmS. This chain is RNase adapter protein RapZ, found in Salmonella typhimurium (strain LT2 / SGSC1412 / ATCC 700720).